The primary structure comprises 423 residues: MNMLGSMFSMVKPRLDDLGTDRLNYYYSTLIIMGMSLTITARQYVGSPLQCWVPAQFTKAWEQYAEDYCFVYNTYWVKPNDKVPLTVEERVSQQLIYYQWAPFIMAIEAAFFYLPVIFWSMLSTKSGINIIKLVETAQKAEGAESEERKKQIDIICRHISNNLRKRRNEEETTKMAKIQRIFGMQHGKYITNVYLVTKLIYMTNSFLQFYSTNKFLGQNDPYWGMRILDDILKGTDWEHSGNFPRIAMCDFQVRVLGNLQRYSIQCVLTLNMFNEKIFLFLYIWFLLVFFVTLFDSIFLCYNMFSSHKLVEFLQQFLDNQDQDENDEKKPEERKVYRKEQHSILLSEFCLHKFTPDIIILLKMINNHTGDIVCTEIVGRMWNEFLERDAKLVLQRFVDNDHHMETKSSSLKSEKLFEEQRSFI.

The next 4 helical transmembrane spans lie at 25–41 (YYYS…TITA), 102–122 (PFIM…WSML), 277–297 (IFLF…FDSI), and 341–361 (HSIL…IILL).

This sequence belongs to the pannexin family. As to quaternary structure, heterooligomer of eat-5 and another innexin. As to expression, expressed in pharyngeal muscles.

Its subcellular location is the cell membrane. It is found in the cell junction. The protein resides in the gap junction. In terms of biological role, structural component of the gap junctions. Required for synchronized pharyngeal muscle contractions. This Caenorhabditis elegans protein is Innexin eat-5 (eat-5).